The primary structure comprises 416 residues: RNA polymerase sigma factor SigA (416 aa).

The segment at 184–254 (MVQSNLRLVV…TRAIADQSRT (71 aa)) is sigma-70 factor domain-2. Residues 208 to 211 (DLIQ) carry the Interaction with polymerase core subunit RpoC motif. The interval 263 to 338 (ETISRIKKTT…EADGETPEDE (76 aa)) is sigma-70 factor domain-3. The segment at 351 to 404 (VLDTLSPRERDVLRLRYGLDDGRMKTLEEIGQIFNVTRERIRQIEAKALRKLRH) is sigma-70 factor domain-4. The H-T-H motif DNA-binding region spans 377-396 (LEEIGQIFNVTRERIRQIEA).

The protein belongs to the sigma-70 factor family. RpoD/SigA subfamily. In terms of assembly, interacts transiently with the RNA polymerase catalytic core.

Its subcellular location is the cytoplasm. Functionally, sigma factors are initiation factors that promote the attachment of RNA polymerase to specific initiation sites and are then released. This sigma factor is the primary sigma factor during exponential growth. The sequence is that of RNA polymerase sigma factor SigA from Microcystis aeruginosa.